Here is a 263-residue protein sequence, read N- to C-terminus: Lens fiber major intrinsic protein (263 aa).

Residues 1-9 are Cytoplasmic-facing; that stretch reads MWELRSASF. Residues 10-29 traverse the membrane as a helical segment; that stretch reads WRAICAEFFASLFYVFFGLG. At 30–41 the chain is on the extracellular side; that stretch reads ASLRWAPGPLHV. A helical transmembrane segment spans residues 42–59; it reads LQVALAFGLALATLVQAV. Topologically, residues 60–61 are cytoplasmic; the sequence is GH. The segment at residues 62-77 is an intramembrane region (discontinuously helical); the sequence is ISGAHVNPAVTFAFLV. The NPA 1 signature appears at 68-70; the sequence is NPA. At 78 to 82 the chain is on the cytoplasmic side; that stretch reads GSQMS. A helical membrane pass occupies residues 83–106; sequence LLRAICYMVAQLLGAVAGAAVLYS. At 107 to 127 the chain is on the extracellular side; that stretch reads VTPPAVRGNLALNTLHPGVSV. The helical transmembrane segment at 128-148 threads the bilayer; it reads GQATIVEIFLTLQFVLCIFAT. The Cytoplasmic portion of the chain corresponds to 149–156; it reads YDERRNGR. A helical membrane pass occupies residues 157–175; sequence LGSVALAVGFSLTLGHLFG. The Extracellular segment spans residues 176 to 178; it reads MYY. Residues 179-193 constitute an intramembrane region (discontinuously helical); that stretch reads TGAGMNPARSFAPAI. The short motif at 184 to 186 is the NPA 2 element; the sequence is NPA. Residues 194 to 200 lie on the Extracellular side of the membrane; that stretch reads LTRNFTN. A helical membrane pass occupies residues 201–222; sequence HWVYWVGPVIGAGLGSLLYDFL. Residues 223–263 lie on the Cytoplasmic side of the membrane; sequence LFPRLKSVSERLSILKGSRPSESNGQPEVTGEPVELKTQAL. Residues 227–237 form an interaction with CALM region; sequence LKSVSERLSIL. Ser235 carries the phosphoserine modification. A disordered region spans residues 239-263; sequence GSRPSESNGQPEVTGEPVELKTQAL. Residue Ser243 is modified to Phosphoserine; by PKA. Phosphoserine is present on Ser245. At Asn246 the chain carries Deamidated asparagine.

This sequence belongs to the MIP/aquaporin (TC 1.A.8) family. In terms of assembly, homotetramer; each monomer provides an independent water pore. Two homotetramers on opposing membranes can dimerize, forming a cell-cell junction. Interacts with CALM; the calcium-calmodulin/CALM complex interacts with the cytoplasmic domains of two aquaporins, leading to channel closure. Interacts with BFSP1 (via C-terminus); prevents calcium-dependent inhibition of the water channel activity. Post-translationally, fatty acylated at Met-1 and Lys-238. The acyl modifications, in decreasing order of ion abundance, are: oleoyl (C18:1) &gt; palmitoyl (C16:0) &gt; stearoyl (C18:0) &gt; eicosenoyl (C20:1) &gt; dihomo-gamma-linolenoyl (C20:3) &gt; palmitoleoyl (C16:1) &gt; eicosadienoyl (C20:2). Subject to partial proteolytic cleavage in the eye lens core. Partial proteolysis promotes interactions between tetramers from adjoining membranes. In terms of tissue distribution, major component of lens fiber junctions.

It is found in the cell membrane. The protein localises to the cell junction. It carries out the reaction H2O(in) = H2O(out). The water channel activity is inhibited by calcium through calmodulin/CALM. Its function is as follows. Aquaporins form homotetrameric transmembrane channels, with each monomer independently mediating water transport across the plasma membrane along its osmotic gradient. Specifically expressed in lens fiber cells, this aquaporin is crucial for maintaining lens water homeostasis and transparency. Beyond water permeability, it also acts as a cell-to-cell adhesion molecule, forming thin junctions between lens fiber cells that are essential for maintaining the ordered structure and transparency of the lens. This chain is Lens fiber major intrinsic protein, found in Bos taurus (Bovine).